The following is a 173-amino-acid chain: ATP synthase subunit b (173 aa).

Residues 12-34 (AFGNLYAIGWSAVNFLVLLALMY) form a helical membrane-spanning segment.

The protein belongs to the ATPase B chain family. F-type ATPases have 2 components, F(1) - the catalytic core - and F(0) - the membrane proton channel. F(1) has five subunits: alpha(3), beta(3), gamma(1), delta(1), epsilon(1). F(0) has three main subunits: a(1), b(2) and c(10-14). The alpha and beta chains form an alternating ring which encloses part of the gamma chain. F(1) is attached to F(0) by a central stalk formed by the gamma and epsilon chains, while a peripheral stalk is formed by the delta and b chains.

The protein resides in the cell membrane. In terms of biological role, f(1)F(0) ATP synthase produces ATP from ADP in the presence of a proton or sodium gradient. F-type ATPases consist of two structural domains, F(1) containing the extramembraneous catalytic core and F(0) containing the membrane proton channel, linked together by a central stalk and a peripheral stalk. During catalysis, ATP synthesis in the catalytic domain of F(1) is coupled via a rotary mechanism of the central stalk subunits to proton translocation. Functionally, component of the F(0) channel, it forms part of the peripheral stalk, linking F(1) to F(0). This chain is ATP synthase subunit b, found in Syntrophomonas wolfei subsp. wolfei (strain DSM 2245B / Goettingen).